Reading from the N-terminus, the 659-residue chain is Biosynthetic arginine decarboxylase 2 (659 aa).

Lys-119 is subject to N6-(pyridoxal phosphate)lysine. 311–321 (LNVGGGLAVDY) is a substrate binding site.

This sequence belongs to the Orn/Lys/Arg decarboxylase class-II family. SpeA subfamily. It depends on Mg(2+) as a cofactor. Pyridoxal 5'-phosphate is required as a cofactor.

It catalyses the reaction L-arginine + H(+) = agmatine + CO2. Catalyzes the biosynthesis of agmatine from arginine. The sequence is that of Biosynthetic arginine decarboxylase 2 (speA2) from Synechocystis sp. (strain ATCC 27184 / PCC 6803 / Kazusa).